Here is a 112-residue protein sequence, read N- to C-terminus: Ig kappa chain V-II region 2S1.3 (112 aa).

Positions Asp-1–Cys-23 are framework-1. The cysteines at positions 23 and 93 are disulfide-linked. The segment at Arg-24–Tyr-39 is complementarity-determining-1. The segment at Trp-40–Tyr-54 is framework-2. The complementarity-determining-2 stretch occupies residues Gln-55–Ser-61. The segment at Gly-62–Cys-93 is framework-3. Positions Ala-94–Thr-102 are complementarity-determining-3. Positions Phe-103 to Lys-112 are framework-4.

This chain is Ig kappa chain V-II region 2S1.3, found in Mus musculus (Mouse).